The chain runs to 276 residues: Non-heme chloroperoxidase (276 aa).

Residues proline 24–leucine 254 enclose the AB hydrolase-1 domain. Residues serine 97, aspartate 227, and histidine 256 contribute to the active site.

The protein belongs to the AB hydrolase superfamily. Bacterial non-heme haloperoxidase / perhydrolase family. As to quaternary structure, homodimer.

The sequence is that of Non-heme chloroperoxidase (cpo) from Streptomyces lividans.